The following is a 261-amino-acid chain: tRNA pseudouridine synthase A (261 aa).

D51 (nucleophile) is an active-site residue. Residue Y109 coordinates substrate.

The protein belongs to the tRNA pseudouridine synthase TruA family. Homodimer.

It catalyses the reaction uridine(38/39/40) in tRNA = pseudouridine(38/39/40) in tRNA. Formation of pseudouridine at positions 38, 39 and 40 in the anticodon stem and loop of transfer RNAs. This chain is tRNA pseudouridine synthase A, found in Shewanella sediminis (strain HAW-EB3).